The chain runs to 328 residues: Ferredoxin--NADP reductase 2 (328 aa).

FAD-binding residues include E37, Q45, Y50, V90, F124, D285, and T325.

It belongs to the ferredoxin--NADP reductase type 2 family. In terms of assembly, homodimer. Requires FAD as cofactor.

The enzyme catalyses 2 reduced [2Fe-2S]-[ferredoxin] + NADP(+) + H(+) = 2 oxidized [2Fe-2S]-[ferredoxin] + NADPH. In Latilactobacillus sakei subsp. sakei (strain 23K) (Lactobacillus sakei subsp. sakei), this protein is Ferredoxin--NADP reductase 2.